Reading from the N-terminus, the 72-residue chain is Translation initiation factor IF-1 (72 aa).

The S1-like domain occupies 1–72 (MAKEDVIEMQ…SKGRIVFRAR (72 aa)).

This sequence belongs to the IF-1 family. In terms of assembly, component of the 30S ribosomal translation pre-initiation complex which assembles on the 30S ribosome in the order IF-2 and IF-3, IF-1 and N-formylmethionyl-tRNA(fMet); mRNA recruitment can occur at any time during PIC assembly.

It is found in the cytoplasm. In terms of biological role, one of the essential components for the initiation of protein synthesis. Stabilizes the binding of IF-2 and IF-3 on the 30S subunit to which N-formylmethionyl-tRNA(fMet) subsequently binds. Helps modulate mRNA selection, yielding the 30S pre-initiation complex (PIC). Upon addition of the 50S ribosomal subunit IF-1, IF-2 and IF-3 are released leaving the mature 70S translation initiation complex. This chain is Translation initiation factor IF-1, found in Pseudoalteromonas translucida (strain TAC 125).